Consider the following 826-residue polypeptide: U4/U6 snRNA-associated-splicing factor PRP24 (826 aa).

4 consecutive RRM domains span residues Thr-310 to Gly-385, Ile-386 to Pro-463, Arg-477 to Ser-554, and Arg-598 to Gln-670.

The protein localises to the nucleus. Functionally, functions as a recycling factor of the spliceosome, a machinery that forms on each precursor-messenger RNA (pre-mRNA) and catalyzes the removal of introns. Chaperones the re-annealing of U4 and U6 snRNAs (small nuclear RNAs) released from previous rounds of splicing, an initial step in reforming the U4/U6-U5 tri-snRNP (small nuclear ribonucleoprotein) that can reassemble into another spliceosome complex; this step involves binding U6 and facilitating the unwinding of the U6 internal stem loop, followed by base-pairing of U6 to U4. The sequence is that of U4/U6 snRNA-associated-splicing factor PRP24 from Ophiostoma ulmi (Dutch elm disease fungus).